Reading from the N-terminus, the 706-residue chain is Protein kinase C theta type (706 aa).

The 107-residue stretch at 1-107 (MSPFLRIGLS…KNNGKTEIWL (107 aa)) folds into the C2 domain. The residue at position 90 (tyrosine 90) is a Phosphotyrosine; by LCK. The segment at 159-209 (CHEFTATFFPQPTFCSVCHEFVWGLNKQGYQCRQCNAAIHKKCIDKVIAKC) adopts a Phorbol-ester/DAG-type 1 zinc-finger fold. Residue threonine 219 is modified to Phosphothreonine; by autocatalysis. The Phorbol-ester/DAG-type 2 zinc finger occupies 231–281 (PHRFKVYNYKSPTFCEHCGTLLWGLARQGLKCDACGMNVHHRCQTKVANLC). At serine 348 the chain carries Phosphoserine. Residues 380-634 (FILHKMLGKG…RGDIRQHPLF (255 aa)) enclose the Protein kinase domain. Residues 386–394 (LGKGSFGKV) and lysine 409 each bind ATP. The active-site Proton acceptor is the aspartate 504. Position 538 is a phosphothreonine; by PDPK1 (threonine 538). The 72-residue stretch at 635–706 (REINWEELER…MNPGMERLIS (72 aa)) folds into the AGC-kinase C-terminal domain. 3 positions are modified to phosphoserine: serine 676, serine 685, and serine 695.

The protein belongs to the protein kinase superfamily. AGC Ser/Thr protein kinase family. PKC subfamily. As to quaternary structure, part of a lipid raft complex composed at least of BCL10, CARD11, MALT1 and IKBKB. Interacts with GLRX3 (via N-terminus). Interacts with ECT2. Interacts with CCDC88A/GIV; the interaction leads to phosphorylation of CCDC88A and inhibition of its guanine nucleotide exchange factor activity. Interacts with PRKCH upstream open reading frame 2; the interaction leads to inhibition of kinase activity. Interacts with CD28. Mg(2+) is required as a cofactor. Autophosphorylation at Thr-219 is required for targeting to the TCR and cellular function of PRKCQ upon antigen receptor ligation. Following TCR stimulation, phosphorylated at Tyr-90 and Ser-685. In terms of tissue distribution, expressed in skeletal muscle, T-cells, megakaryoblastic cells and platelets.

Its subcellular location is the cytoplasm. It localises to the cell membrane. The catalysed reaction is L-seryl-[protein] + ATP = O-phospho-L-seryl-[protein] + ADP + H(+). It carries out the reaction L-threonyl-[protein] + ATP = O-phospho-L-threonyl-[protein] + ADP + H(+). Novel PKCs (PRKCD, PRKCE, PRKCH and PRKCQ) are calcium-insensitive, but activated by diacylglycerol (DAG) and phosphatidylserine. Three specific sites; Thr-538 (activation loop of the kinase domain), Ser-676 (turn motif) and Ser-695 (hydrophobic region), need to be phosphorylated for its full activation. Inhibited by PRKCH upstream open reading frame 2. Functionally, calcium-independent, phospholipid- and diacylglycerol (DAG)-dependent serine/threonine-protein kinase that mediates non-redundant functions in T-cell receptor (TCR) signaling, including T-cells activation, proliferation, differentiation and survival, by mediating activation of multiple transcription factors such as NF-kappa-B, JUN, NFATC1 and NFATC2. In TCR-CD3/CD28-co-stimulated T-cells, is required for the activation of NF-kappa-B and JUN, which in turn are essential for IL2 production, and participates in the calcium-dependent NFATC1 and NFATC2 transactivation. Mediates the activation of the canonical NF-kappa-B pathway (NFKB1) by direct phosphorylation of CARD11 on several serine residues, inducing CARD11 association with lipid rafts and recruitment of the BCL10-MALT1 complex, which then activates IKK complex, resulting in nuclear translocation and activation of NFKB1. May also play an indirect role in activation of the non-canonical NF-kappa-B (NFKB2) pathway. In the signaling pathway leading to JUN activation, acts by phosphorylating the mediator STK39/SPAK and may not act through MAP kinases signaling. Plays a critical role in TCR/CD28-induced NFATC1 and NFATC2 transactivation by participating in the regulation of reduced inositol 1,4,5-trisphosphate generation and intracellular calcium mobilization. After costimulation of T-cells through CD28 can phosphorylate CBLB and is required for the ubiquitination and subsequent degradation of CBLB, which is a prerequisite for the activation of TCR. During T-cells differentiation, plays an important role in the development of T-helper 2 (Th2) cells following immune and inflammatory responses, and, in the development of inflammatory autoimmune diseases, is necessary for the activation of IL17-producing Th17 cells. May play a minor role in Th1 response. Upon TCR stimulation, mediates T-cell protective survival signal by phosphorylating BAD, thus protecting T-cells from BAD-induced apoptosis, and by up-regulating BCL-X(L)/BCL2L1 levels through NF-kappa-B and JUN pathways. In platelets, regulates signal transduction downstream of the ITGA2B, CD36/GP4, F2R/PAR1 and F2RL3/PAR4 receptors, playing a positive role in 'outside-in' signaling and granule secretion signal transduction. May relay signals from the activated ITGA2B receptor by regulating the uncoupling of WASP and WIPF1, thereby permitting the regulation of actin filament nucleation and branching activity of the Arp2/3 complex. May mediate inhibitory effects of free fatty acids on insulin signaling by phosphorylating IRS1, which in turn blocks IRS1 tyrosine phosphorylation and downstream activation of the PI3K/AKT pathway. Phosphorylates MSN (moesin) in the presence of phosphatidylglycerol or phosphatidylinositol. Phosphorylates PDPK1 at 'Ser-504' and 'Ser-532' and negatively regulates its ability to phosphorylate PKB/AKT1. Phosphorylates CCDC88A/GIV and inhibits its guanine nucleotide exchange factor activity. Phosphorylates and activates LRRK1, which phosphorylates RAB proteins involved in intracellular trafficking. The chain is Protein kinase C theta type (PRKCQ) from Homo sapiens (Human).